The sequence spans 392 residues: MKCAGQIEARAVEESSINLDPIQAAGRLTPEAMKAVIAWGDGYSVCDNCHKPFRLDYVTKPPIADFHEEAAKWLGMDKIQLVPGARRAFQEVTGALVGKGEPVIMTGMGHYTAYLSVEVVNGVVREIRPTADHHITADAAAESIENAVREFGYAPKLVFVDAVDFMYGNMHEVEKIAKVAHQYDIPVLYNGVYTVGVLPVDGKKLGVDFVVGSGHKSMAAPAPSGILATTDEYAEIVLRTTKIQGDITGRKFGIKQVGILGCSLMGDPAVGLIASFPRVKERVNHFDEELKNHKIVTDALLSIEGTKVASEYPRKHTLTRMDTAGSFDVIARTHKKRGFFLSSALNKRGITGIMPGVTKQWKFNTYGLTKTQAEYLADSFIEIAEENSMVVG.

Residues 85-86 (AR), N190, and 213-215 (SGH) each bind pyridoxal 5'-phosphate. An N6-(pyridoxal phosphate)lysine modification is found at K216.

It belongs to the SepCysS family. Homodimer. Interacts with SepRS. Requires pyridoxal 5'-phosphate as cofactor.

The enzyme catalyses O-phospho-L-seryl-tRNA(Cys) + hydrogen sulfide + H(+) = L-cysteinyl-tRNA(Cys) + phosphate. In terms of biological role, converts O-phospho-L-seryl-tRNA(Cys) (Sep-tRNA(Cys)) to L-cysteinyl-tRNA(Cys) (Cys-tRNA(Cys)). In Methanocorpusculum labreanum (strain ATCC 43576 / DSM 4855 / Z), this protein is O-phospho-L-seryl-tRNA:Cys-tRNA synthase 2.